Here is a 393-residue protein sequence, read N- to C-terminus: Neuroplastin (393 aa).

The signal sequence occupies residues 1–28; it reads MSGSSLPGALALSLLLVSGSLLPGPGAA. Ig-like domains are found at residues 29–134, 148–234, and 237–327; these read QNAG…PSIT, PRIV…IEVK, and PDIT…ASVS. The Extracellular segment spans residues 29–338; that stretch reads QNAGFVKSPM…VLRVRSHLAP (310 aa). Cysteine 52 and cysteine 116 form a disulfide bridge. The segment at 149–161 is narpin; mediates binding with FGFR1 and has antidepressant-like activity; that stretch reads RIVTSEEVIIRDS. Cysteine 169 and cysteine 217 are oxidised to a cystine. N-linked (GlcNAc...) asparagine glycosylation is found at asparagine 170, asparagine 196, asparagine 228, asparagine 283, asparagine 295, and asparagine 316. The cysteines at positions 258 and 315 are disulfide-linked. The helical transmembrane segment at 339 to 359 threads the bilayer; it reads LWPFLGILAEIIILVVIIVVY. Topologically, residues 360-393 are cytoplasmic; it reads EKRKRPDEVPDAGPMKTNSTNNHKDKNLRQRNTN. Residues 366 to 393 are disordered; sequence DEVPDAGPMKTNSTNNHKDKNLRQRNTN.

Interacts with ATP2B1; this interaction stabilizes ATP2B1 and increases ATPase activity; this interaction controls T cell calcium homeostasis following T cell activation. Interacts with XKR8; promoting its localization at the cell membrane. Isoform 1 and isoform 2 are N-glycosylated. Isoform 1 is ubiquitously expressed. Isoform 2 is brain-specific. In brain isoform 2 is highly expressed in hippocampus and cerebral cortex and weakly in cerebellum and lower brain regions. In the hippocampus isoform 2 is found in the dentate gyrus and CA1-CA4, the striatum oriens of CA3 shows the higher level.

Its subcellular location is the cell membrane. The protein resides in the postsynaptic density. In terms of biological role, probable homophilic and heterophilic cell adhesion molecule involved in long term potentiation at hippocampal excitatory synapses through activation of p38MAPK. May also regulate neurite outgrowth by activating the FGFR1 signaling pathway. May play a role in synaptic plasticity. Also acts as a chaperone for ATP2B1; stabilizes ATP2B1 and increases its ATPase activity. Promotes localization of XKR8 at the cell membrane. This is Neuroplastin (Nptn) from Rattus norvegicus (Rat).